The sequence spans 70 residues: Small ribosomal subunit protein bS21 (70 aa).

This sequence belongs to the bacterial ribosomal protein bS21 family.

This chain is Small ribosomal subunit protein bS21, found in Herminiimonas arsenicoxydans.